A 70-amino-acid chain; its full sequence is Conotoxin Im11.11 (70 aa).

The N-terminal stretch at 1–25 is a signal peptide; sequence MFRLTSVGCILLVIAFLNLVGLTNA. Intrachain disulfides connect Cys-26–Cys-40, Cys-33–Cys-45, Cys-39–Cys-49, and Cys-44–Cys-53. At Pro-56 the chain carries Proline amide. The propeptide occupies 60 to 70; it reads TRLQGFFKHRR.

Belongs to the conotoxin I2 superfamily. Expressed by the venom duct.

The protein resides in the secreted. Its function is as follows. Probable neurotoxin. In Conus imperialis (Imperial cone), this protein is Conotoxin Im11.11.